Here is a 501-residue protein sequence, read N- to C-terminus: MLO-like protein 5 (501 aa).

Residues 1–22 (MAGGGGGSTSGEGPRELDQTPT) are Extracellular-facing. Residues 23–43 (WAVSTVCGVIILISIVLELMI) traverse the membrane as a helical segment. The Cytoplasmic segment spans residues 44–68 (HKIGEVFTERRKKALYEALQKIKNE). The helical transmembrane segment at 69–89 (LMVLGFISLLLTFGQNYIASL) threads the bilayer. The Extracellular portion of the chain corresponds to 90–151 (CVASRYGHAM…ISLNALHQVH (62 aa)). A helical transmembrane segment spans residues 152 to 172 (IFIFFLAVFHVIYSAITMMLG). At 173–273 (RAKIRGWKVW…IKRSLEDDFK (101 aa)) the chain is on the cytoplasmic side. Residues 274 to 294 (VVVGISPELWAFVMLFLLFDV) form a helical membrane-spanning segment. His295 is a topological domain (extracellular). A helical membrane pass occupies residues 296-316 (GWYVTAVITMIPPLLTLAIGT). Topologically, residues 317 to 359 (KLQAIISDMALEIQERHAVIQGMPLVNVSDRHFWFSRPALVLH) are cytoplasmic. The chain crosses the membrane as a helical span at residues 360–380 (IIHFILFQNAFEITYFFWIWY). Residues 381–391 (EFGLRSCFHHH) lie on the Extracellular side of the membrane. The helical transmembrane segment at 392 to 412 (FALIIIRVALGVGVQFLCSYI) threads the bilayer. The Cytoplasmic segment spans residues 413-501 (TLPLYALVTQ…SQSRDLLSGP (89 aa)). The segment at 443–501 (WHKNAKKKSETPGQTQPPLPNLRPKTGGDIESASPANITASVDVKESDQSQSRDLLSGP) is disordered. The interval 450–471 (KSETPGQTQPPLPNLRPKTGGD) is calmodulin-binding. Residues 491–501 (QSQSRDLLSGP) show a composition bias toward polar residues.

The protein belongs to the MLO family.

Its subcellular location is the membrane. In terms of biological role, may be involved in modulation of pathogen defense and leaf cell death. Activity seems to be regulated by Ca(2+)-dependent calmodulin binding and seems not to require heterotrimeric G proteins. The sequence is that of MLO-like protein 5 (MLO5) from Arabidopsis thaliana (Mouse-ear cress).